Here is a 238-residue protein sequence, read N- to C-terminus: Probable transcriptional regulatory protein SPH_2064 (238 aa).

The protein belongs to the TACO1 family. YeeN subfamily.

The protein localises to the cytoplasm. The polypeptide is Probable transcriptional regulatory protein SPH_2064 (Streptococcus pneumoniae (strain Hungary19A-6)).